We begin with the raw amino-acid sequence, 104 residues long: Gallinacin-11 (104 aa).

Residues 1-22 (MKLFSCLMALLLFLLQAVPGLG) form the signal peptide. 3 disulfide bridges follow: Cys-30–Cys-60, Cys-37–Cys-53, and Cys-43–Cys-61.

This sequence belongs to the beta-defensin family. In terms of tissue distribution, detected in outer membrane of the vitelline layer of the egg (at protein level). Expressed in the liver, gall bladder, kidney, testis, ovary and male and female reproductive tracts. Expressed in the ovarian stroma, but not in the ovarian follicles. No expression is detected in bone marrow.

The protein localises to the secreted. Its subcellular location is the cytoplasmic granule. Has bactericidal activity. This chain is Gallinacin-11 (GAL11), found in Gallus gallus (Chicken).